We begin with the raw amino-acid sequence, 131 residues long: Putative superoxide reductase (131 aa).

Residues glutamate 15, histidine 17, histidine 45, histidine 51, cysteine 115, and histidine 118 each contribute to the Fe cation site.

It belongs to the desulfoferrodoxin family. The cofactor is Fe cation.

It carries out the reaction reduced [rubredoxin] + superoxide + 2 H(+) = oxidized [rubredoxin] + H2O2. Its function is as follows. Uses electrons from reduced NADP, by way of rubredoxin and an oxidoreductase, to catalyze the reduction of superoxide to hydrogen peroxide. The sequence is that of Putative superoxide reductase from Thermotoga maritima (strain ATCC 43589 / DSM 3109 / JCM 10099 / NBRC 100826 / MSB8).